The following is a 114-amino-acid chain: Ribonuclease P protein component (114 aa).

Belongs to the RnpA family. As to quaternary structure, consists of a catalytic RNA component (M1 or rnpB) and a protein subunit.

It carries out the reaction Endonucleolytic cleavage of RNA, removing 5'-extranucleotides from tRNA precursor.. In terms of biological role, RNaseP catalyzes the removal of the 5'-leader sequence from pre-tRNA to produce the mature 5'-terminus. It can also cleave other RNA substrates such as 4.5S RNA. The protein component plays an auxiliary but essential role in vivo by binding to the 5'-leader sequence and broadening the substrate specificity of the ribozyme. This Staphylococcus haemolyticus (strain JCSC1435) protein is Ribonuclease P protein component.